The sequence spans 623 residues: Pyranose 2-oxidase (623 aa).

An N-terminal signal peptide occupies residues 1 to 27 (MSTSSSDPFFNFTKSSFRSAAAQKASA). Residues 28–38 (TSLPPLPGPDK) constitute a propeptide that is removed on maturation. Histidine 167 is modified (tele-8alpha-FAD histidine). 2 residues coordinate substrate: glutamine 448 and histidine 450. Histidine 548 serves as the catalytic Proton acceptor. The active site involves asparagine 593.

It belongs to the GMC oxidoreductase family. As to quaternary structure, homotetramer. The cofactor is FAD. In terms of processing, not glycosylated.

The protein resides in the periplasm. The enzyme catalyses D-glucose + O2 = 2-dehydro-D-glucose + H2O2. Its function is as follows. Catalyzes the oxidation of various aldopyranoses and disaccharides on carbon-2 to the corresponding 2-keto sugars concomitant with the reduction of O(2) to H(2)O(2). Plays an important role in lignin degradation of wood rot fungi by supplying the essential cosubstrate H(2)O(2) for the ligninolytic peroxidases, lignin peroxidase and manganese-dependent peroxidase. The preferred substrate is D-glucose which is converted to 2-dehydro-D-glucose. Also acts on D-xylose, together with D-glucose the major sugars derived from wood, on L-sorbose, D-galactose and 1,5-anhydroglucitol, a diagnostic marker of diabetes mellitus. This chain is Pyranose 2-oxidase (P2OX), found in Trametes versicolor (White-rot fungus).